The sequence spans 542 residues: Probable quinate permease (542 aa).

Residues 1-22 (MSILALVEDRPTPKEVYNWKIY) are Cytoplasmic-facing. The chain crosses the membrane as a helical span at residues 23–43 (LLAAVASFTSCMIGYDSAFIG). Over 44–74 (TTLALSSFREEFGFSTMSKTAVNLVSANIVS) the chain is Extracellular. A helical transmembrane segment spans residues 75 to 95 (CYQAGAFFGAFFAYPIGHFWG). The Cytoplasmic segment spans residues 96 to 97 (RK). The helical transmembrane segment at 98-118 (WGLLFAGTIFTLGAGLMLGAN) threads the bilayer. Topologically, residues 119–130 (GDRGLGLLYGGR) are extracellular. The helical transmembrane segment at 131-151 (VLAGLGVGAGSNITPIYISEM) threads the bilayer. Over 152-159 (APPSIRGR) the chain is Cytoplasmic. A helical transmembrane segment spans residues 160–180 (LVGVYELGWQIGGLVGFWINY). The Extracellular portion of the chain corresponds to 181 to 193 (GVSETLAPSHKQW). Residues 194 to 214 (IIPFAVQLIPSGLLLIGAVFL) traverse the membrane as a helical segment. The Cytoplasmic portion of the chain corresponds to 215-285 (KESPRWLFSR…AGTNKKVMYR (71 aa)). Residues 286–306 (LFLGSMLFFWQNGSGINAINY) form a helical membrane-spanning segment. The Extracellular portion of the chain corresponds to 307 to 325 (YSPTVFKSIGLHGANTSMF). A helical membrane pass occupies residues 326 to 346 (STGIFGVVKTVVTFVWLLYLI). Residues 347–352 (DRLGRR) are Cytoplasmic-facing. The helical transmembrane segment at 353-373 (LLLLIGAAGAAVCLLIVGAYI) threads the bilayer. Topologically, residues 374-387 (KIADPASNPTQEMT) are extracellular. A helical membrane pass occupies residues 388-408 (GGGIAAMFFFYLYTVFYTPSW). Over 409–456 (NGTPWVMNSEMFEPNMRSLAQACAAASNWLWNFLISRFTPQMFAKMEY) the chain is Cytoplasmic. A helical transmembrane segment spans residues 457 to 477 (GVWFFFASLMLLSIVFVFFLV). Residues 478–542 (PETKGIPLES…EHVSEDLPKV (65 aa)) lie on the Extracellular side of the membrane. The interval 523-542 (GYSKTGEQQVEHVSEDLPKV) is disordered. Basic and acidic residues predominate over residues 531–542 (QVEHVSEDLPKV).

This sequence belongs to the major facilitator superfamily. Sugar transporter (TC 2.A.1.1) family. As to quaternary structure, interacts with creB. Post-translationally, ubiquitinated. Deubiquitinated by creB, probably to control its activity or amount.

It localises to the cell membrane. Integral membrane transporter that imports quinic acid to be catabolized as a carbon source. The chain is Probable quinate permease (qutD) from Aspergillus fumigatus (strain CBS 144.89 / FGSC A1163 / CEA10) (Neosartorya fumigata).